The chain runs to 121 residues: Auxin-responsive protein SAUR32 (121 aa).

This sequence belongs to the ARG7 family. In terms of tissue distribution, expressed in roots, leaves and stems.

It is found in the nucleus. Its subcellular location is the cytoplasm. May play a role in the apical hook development. This Arabidopsis thaliana (Mouse-ear cress) protein is Auxin-responsive protein SAUR32.